Reading from the N-terminus, the 878-residue chain is DNA mismatch repair protein MutS (878 aa).

629–636 contacts ATP; it reads GPNMAGKS.

This sequence belongs to the DNA mismatch repair MutS family.

Its function is as follows. This protein is involved in the repair of mismatches in DNA. It is possible that it carries out the mismatch recognition step. This protein has a weak ATPase activity. This Roseobacter denitrificans (strain ATCC 33942 / OCh 114) (Erythrobacter sp. (strain OCh 114)) protein is DNA mismatch repair protein MutS.